The following is a 178-amino-acid chain: Putative pre-16S rRNA nuclease (178 aa).

Over residues 1–18 (MDHAEQGPDRPGVDDPGR) the composition is skewed to basic and acidic residues. The tract at residues 1-21 (MDHAEQGPDRPGVDDPGRGRR) is disordered.

This sequence belongs to the YqgF nuclease family.

It is found in the cytoplasm. Could be a nuclease involved in processing of the 5'-end of pre-16S rRNA. The polypeptide is Putative pre-16S rRNA nuclease (Rhodococcus jostii (strain RHA1)).